Here is a 794-residue protein sequence, read N- to C-terminus: LPS-assembly protein LptD (794 aa).

The N-terminal stretch at 1 to 31 (MPSHCSSLLCARFRLSSLAVIVALAASGVRA) is a signal peptide.

This sequence belongs to the LptD family. Component of the lipopolysaccharide transport and assembly complex. Interacts with LptE and LptA.

It is found in the cell outer membrane. Together with LptE, is involved in the assembly of lipopolysaccharide (LPS) at the surface of the outer membrane. This is LPS-assembly protein LptD from Marinobacter nauticus (strain ATCC 700491 / DSM 11845 / VT8) (Marinobacter aquaeolei).